A 210-amino-acid chain; its full sequence is MDKKKNISMAVIRRLPKYHRYLYELLKNDVDRISSKELSEKIGFTASQIRQDLNCFGDFGQQGYGYNVSELHHQISNILGLNNPYNIIIIGAGNIGQALANYTRFSKLGFNVKTMFDTNPKLIGLKIREIEILDIDYLSSYLEKNNIDIGIICVPHDNAQKVANILVKNDIKGIWNFAPIDLSVPEDVVVENVHLSDSLLTLTCLINKTE.

The H-T-H motif DNA-binding region spans 17 to 56 (KYHRYLYELLKNDVDRISSKELSEKIGFTASQIRQDLNCF). 91-96 (GAGNIG) is an NAD(+) binding site.

The protein belongs to the transcriptional regulatory Rex family. In terms of assembly, homodimer.

The protein localises to the cytoplasm. Modulates transcription in response to changes in cellular NADH/NAD(+) redox state. The sequence is that of Redox-sensing transcriptional repressor Rex from Clostridium botulinum (strain Loch Maree / Type A3).